We begin with the raw amino-acid sequence, 556 residues long: Phospholipase D (556 aa).

The signal sequence occupies residues 1 to 47 (MTSDQRPARLPTHKGKLLAPHRLHRLIPVSVALTTVCAALPSSTAYA). Residues 210–237 (SLSWNHSKLLVVDGKTAITGGINGWKDD) form the PLD phosphodiesterase 1 domain. The disordered stretch occupies residues 326–360 (SDPSSGYHPDLPTAPDTKCTVGLHDNTNADRDYDT). One can recognise a PLD phosphodiesterase 2 domain in the interval 484 to 511 (KPYALHHKLVSVDDSAFYIGSKNLYPAW).

Belongs to the phospholipase D family. Probably has at least 1 disulfide bond.

It localises to the secreted. The catalysed reaction is a 1,2-diacyl-sn-glycero-3-phosphocholine + H2O = a 1,2-diacyl-sn-glycero-3-phosphate + choline + H(+). Its activity is regulated as follows. Inhibited by mercaptoethanol and dithiothreitol. A reversible phospholipase active on phosphatidylcholine (PC) and phosphatidylethanolamine. Lysophosphatidylcholine and egg sphingomyelin are hydrolyzed about 50 times and 100 times more slowly than PC, respectively. During the transphosphatidylation reaction straight-chain hydroxy compounds, such as triethyleneglycol and triethyleneglycol monomethyl ether, were phosphatidylated in good yield, as were monosaccharides. Disaccharides and sugar alcohol reacted slowly, while N-acetyl-D-galactosamine, D-galactosamine and D-galacturonic acid were not phosphatidylated. The polypeptide is Phospholipase D (Streptomyces antibioticus).